The chain runs to 436 residues: MKNVGIISLGCHKNTIDSEKMLAILKEKGYNIVNDENKADILIINTCGFIEDAKRESIECIIEMGKLKKHRLKYLIATGCLSERYNKELLKELPELDAVIGTGDFHKIAEVIEKIEKGKTVLEYGHANLLNDEGIQRILTTPNYYAYLKIAEGCSNACSFCIIPRLRGRYRSRKMEDILREAEELVKKGVKELILIAQDTTKYGVDVYKKFMLPQLLKEISKIDGLKWIRLLYAYPDSVTEELVEEIKNNEKIVKYIDIPLQHSHDEVLKRMNRNTNKQKIEEVISRLRSIPYMVIRTTFMVGFPGETEEEFEDLKQFVKEKRFERVGVFTYSREEGTKSYYMKPQIKKSVKIKRQQELMEIQKEISYQHNLSKVGKQLEVLIEGFEDGIYYGRSYMDAPEIDGVVYVKSDKKLKAGDFVVATITDAYEYDLVGEY.

The MTTase N-terminal domain occupies 2-117 (KNVGIISLGC…IAEVIEKIEK (116 aa)). 6 residues coordinate [4Fe-4S] cluster: C11, C47, C80, C154, C158, and C161. The Radical SAM core domain maps to 140–369 (TTPNYYAYLK…MEIQKEISYQ (230 aa)). In terms of domain architecture, TRAM spans 372-436 (LSKVGKQLEV…AYEYDLVGEY (65 aa)).

It belongs to the methylthiotransferase family. RimO subfamily. Requires [4Fe-4S] cluster as cofactor.

It is found in the cytoplasm. It carries out the reaction L-aspartate(89)-[ribosomal protein uS12]-hydrogen + (sulfur carrier)-SH + AH2 + 2 S-adenosyl-L-methionine = 3-methylsulfanyl-L-aspartate(89)-[ribosomal protein uS12]-hydrogen + (sulfur carrier)-H + 5'-deoxyadenosine + L-methionine + A + S-adenosyl-L-homocysteine + 2 H(+). Functionally, catalyzes the methylthiolation of an aspartic acid residue of ribosomal protein uS12. The protein is Ribosomal protein uS12 methylthiotransferase RimO of Thermoanaerobacter sp. (strain X514).